The sequence spans 2098 residues: Non-reducing polyketide synthase crz7 (2098 aa).

The Starter acyltransferase (SAT) domain maps to 8-243; that stretch reads ILFGDQTVDP…IKLPITAAFH (236 aa). A Ketosynthase family 3 (KS3) domain is found at 364-789; it reads SSDIAIIGFA…GGNTSLLLED (426 aa). Catalysis depends on for beta-ketoacyl synthase activity residues Cys532, His667, and His706. The 325-residue stretch at 887 to 1211 folds into the Malonyl-CoA:ACP transacylase (MAT) domain; it reads IFLFTGQGSQ…IANAYNSGVK (325 aa). The tract at residues 1270-1404 is N-terminal hotdog fold; the sequence is TCLQGVENET…CTVMYGDGQQ (135 aa). The 309-residue stretch at 1270-1578 folds into the PKS/mFAS DH domain; that stretch reads TCLQGVENET…FQQMKRTTLQ (309 aa). His1305 functions as the Proton acceptor; for dehydratase activity in the catalytic mechanism. Positions 1431–1578 are C-terminal hotdog fold; it reads IHRMLKEMIY…FQQMKRTTLQ (148 aa). Asp1491 functions as the Proton donor; for dehydratase activity in the catalytic mechanism. Positions 1613-1690 constitute a Carrier 1 domain; the sequence is QSPSAGFSKV…ELRAFFLDKM (78 aa). Ser1650 is subject to O-(pantetheine 4'-phosphoryl)serine. The tract at residues 1693-1725 is disordered; it reads PQATANDDDSDDSSEDEDPGYSRSQSNSTISTP. Residues 1698–1711 are compositionally biased toward acidic residues; sequence NDDDSDDSSEDEDP. Positions 1714-1724 are enriched in polar residues; the sequence is SRSQSNSTIST. In terms of domain architecture, Carrier 2 spans 1725–1802; it reads PEEPDVVSIL…DVQKALGPTS (78 aa). An O-(pantetheine 4'-phosphoryl)serine modification is found at Ser1762. The interval 1844–2080 is thioesterase (TE) domain; that stretch reads LFLLPDGAGS…VSGNHFSIMF (237 aa).

Requires pantetheine 4'-phosphate as cofactor.

The protein operates within secondary metabolite biosynthesis. Its function is as follows. Non-reducing polyketide synthase; part of the gene cluster that mediates the biosynthesis of the red pigment cristazarin, a naphthazarin derivative. The polyketide product of crz7 is likely 2-acetyl-1,3,6,8-tetrahydoxynaphthalene (AT4HN) from which a probable biosynthetic route of cristazarin can be deduced. The presence of two O-methyltransferases (crz1 and crz2), an enoyl reductase (crz5), an oxidase (crz8), and a short-chain dehydrogenase (crz9) encoded in the cristazarin biosynthetic cluster is consistent with methylation of a hydroxyl group, addition of two hydroxyl groups to the naphthalene core ring, and reduction of the acetyl side chain. The sequence is that of Non-reducing polyketide synthase crz7 from Cladonia metacorallifera (Lichen-forming fungus).